Here is a 405-residue protein sequence, read N- to C-terminus: Dematin (405 aa).

3 disordered regions span residues methionine 1–serine 29, serine 81–tryptophan 100, and isoleucine 108–asparagine 332. Residues serine 11–serine 29 show a composition bias toward low complexity. Residues serine 16, serine 18, serine 26, serine 92, serine 96, serine 110, and serine 113 each carry the phosphoserine modification. The segment covering serine 113–serine 124 has biased composition (low complexity). The residue at position 114 (threonine 114) is a Phosphothreonine. A phosphoserine mark is found at serine 156 and serine 226. Over residues glutamate 216–glutamate 228 the composition is skewed to acidic residues. The tract at residues aspartate 224–proline 308 is interaction with RASGRF2. 2 stretches are compositionally biased toward basic and acidic residues: residues glutamate 229–serine 242 and isoleucine 252–leucine 261. 8 positions are modified to phosphoserine: serine 269, serine 279, serine 289, serine 303, serine 315, serine 333, serine 372, and serine 383. Residues histidine 277–serine 292 are compositionally biased toward low complexity. A compositionally biased stretch (polar residues) spans glycine 294 to glutamate 322. Positions valine 337–phenylalanine 405 constitute an HP domain. Serine 403 is modified (phosphoserine; by PKA).

The protein belongs to the villin/gelsolin family. Monomeric (isoform 2); under reducing conditions. Self-associates. Exists under oxidizing condition as a trimer of two isoforms 2 and isoform 1 linked by disulfide bonds. Found in a complex with DMTN, F-actin and spectrin. Found in a complex with ADD2, DMTN and SLC2A1. Interacts with F-actin, ITPKB and spectrin. Isoform 2 interacts with SLC2A1 (via C-terminus cytoplasmic region). Interacts with RASGRF2. Post-translationally, phosphorylated. Phosphorylation at Ser-403 by PKA causes the C-terminal headpiece domain to associate with the N-terminal core domain, and leads to the inhibition of its actin bundling activity. Expressed in platelets. Isoform 1 and isoform 2 are expressed in mature erythrocytes (at protein level).

Its subcellular location is the cytoplasm. The protein localises to the cytosol. It is found in the perinuclear region. It localises to the cytoskeleton. The protein resides in the cell membrane. Its subcellular location is the membrane. The protein localises to the endomembrane system. It is found in the cell projection. In terms of biological role, membrane-cytoskeleton-associated protein with F-actin-binding activity that induces F-actin bundles formation and stabilization. Its F-actin-bundling activity is reversibly regulated upon its phosphorylation by the cAMP-dependent protein kinase A (PKA). Binds to the erythrocyte membrane glucose transporter-1 SLC2A1/GLUT1, and hence stabilizes and attaches the spectrin-actin network to the erythrocytic plasma membrane. Plays a role in maintaining the functional integrity of PKA-activated erythrocyte shape and the membrane mechanical properties. Also plays a role as a modulator of actin dynamics in fibroblasts; acts as a negative regulator of the RhoA activation pathway. In platelets, functions as a regulator of internal calcium mobilization across the dense tubular system that affects platelet granule secretion pathways and aggregation. Also required for the formation of a diverse set of cell protrusions, such as filopodia and lamellipodia, necessary for platelet cell spreading, motility and migration. Acts as a tumor suppressor and inhibits malignant cell transformation. In Mus musculus (Mouse), this protein is Dematin (Dmtn).